The primary structure comprises 20 residues: Fibrinogen beta chain (20 aa).

Positions isoleucine 1–arginine 12 are enriched in acidic residues. The tract at residues isoleucine 1 to arginine 20 is disordered.

Heterohexamer; disulfide linked. Contains 2 sets of 3 non-identical chains (alpha, beta and gamma). The 2 heterotrimers are in head to head conformation with the N-termini in a small central domain. Conversion of fibrinogen to fibrin is triggered by thrombin, which cleaves fibrinopeptides A and B from alpha and beta chains, and thus exposes the N-terminal polymerization sites responsible for the formation of the soft clot.

The protein resides in the secreted. Cleaved by the protease thrombin to yield monomers which, together with fibrinogen alpha (FGA) and fibrinogen gamma (FGG), polymerize to form an insoluble fibrin matrix. Fibrin has a major function in hemostasis as one of the primary components of blood clots. In addition, functions during the early stages of wound repair to stabilize the lesion and guide cell migration during re-epithelialization. Was originally thought to be essential for platelet aggregation, based on in vitro studies using anticoagulated blood. However subsequent studies have shown that it is not absolutely required for thrombus formation in vivo. Enhances expression of SELP in activated platelets. Maternal fibrinogen is essential for successful pregnancy. Fibrin deposition is also associated with infection, where it protects against IFNG-mediated hemorrhage. May also facilitate the antibacterial immune response via both innate and T-cell mediated pathways. The chain is Fibrinogen beta chain (FGB) from Felis catus (Cat).